Reading from the N-terminus, the 561-residue chain is Dihydroxy-acid dehydratase (561 aa).

Position 50 (Cys-50) interacts with [2Fe-2S] cluster. A Mg(2+)-binding site is contributed by Asp-82. Cys-123 lines the [2Fe-2S] cluster pocket. Mg(2+)-binding residues include Asp-124 and Lys-125. N6-carboxylysine is present on Lys-125. Cys-195 lines the [2Fe-2S] cluster pocket. Glu-447 contributes to the Mg(2+) binding site. Residue Ser-473 is the Proton acceptor of the active site.

Belongs to the IlvD/Edd family. Homodimer. Requires [2Fe-2S] cluster as cofactor. Mg(2+) is required as a cofactor.

It carries out the reaction (2R)-2,3-dihydroxy-3-methylbutanoate = 3-methyl-2-oxobutanoate + H2O. The catalysed reaction is (2R,3R)-2,3-dihydroxy-3-methylpentanoate = (S)-3-methyl-2-oxopentanoate + H2O. The protein operates within amino-acid biosynthesis; L-isoleucine biosynthesis; L-isoleucine from 2-oxobutanoate: step 3/4. It participates in amino-acid biosynthesis; L-valine biosynthesis; L-valine from pyruvate: step 3/4. Functions in the biosynthesis of branched-chain amino acids. Catalyzes the dehydration of (2R,3R)-2,3-dihydroxy-3-methylpentanoate (2,3-dihydroxy-3-methylvalerate) into 2-oxo-3-methylpentanoate (2-oxo-3-methylvalerate) and of (2R)-2,3-dihydroxy-3-methylbutanoate (2,3-dihydroxyisovalerate) into 2-oxo-3-methylbutanoate (2-oxoisovalerate), the penultimate precursor to L-isoleucine and L-valine, respectively. This is Dihydroxy-acid dehydratase from Rippkaea orientalis (strain PCC 8801 / RF-1) (Cyanothece sp. (strain PCC 8801)).